A 1388-amino-acid chain; its full sequence is MSLDELFTVRSTATANATQIRNLKAIQISIASPENIREWSYGEVKKPETINYRTFKPERDGLFCAKIFGPVKDYECNCGKYKRMKHRGIVCEKCGVEVIASKVRRERMGHIELAAPVAHIWFLKTLPSKIGTLLDMAMADLEKVLYFDSYIVLDPGSTNLTKMQVISEDQYLQVIEHINEESFVVGMGAEAIRGLLEELNLETLRNSLREESQSTKSQTKKKKLTKRLKVVEAFIESGNRPEWMIMEVIPVIPPELRPLVPLDGGRFATSDLNDLYRRVINRNNRLKRLMELGAPEIIIRNEKRMLQEAVDALFDNGRRGRAIAGTNGRPLKSLSDMIKGKQGRFRQNLLGKRVDYSGRSVIVVGPKLKLHQCGLPKKMALELFKPFIYSELEKRGHASTIKSAKKIVEREELVVWDILSDVVREYPILLNRAPTLHRLGIQAFEPLLVEGKAIQLHPLVCAAYNADFDGDQMAVHIPLSVEAQVECRVLMMSTNNILSPANGSPVIVPSQDIVLGLYYMTVERSFEKGEGMVFCAPWEVISAIDNNQVNIHAKIKVRMEDGNIYNTTAGRILVWEGLPKGLKFEYVNCVLTKKNIATLVGNAYRDAGIKATVILCDRLKDIGYEYATRAGITIGVKDLIIPATKKTIIDTATSEVDDIERQYRDGIITRTEKYNKVVDVWTKATQDISSEMTKEISTEVVKDPKTERTEVNQSFNPIFMMSNSGARGNQDQMRQLAGMRGLMAKPSGEIIETPITSNFREGLTVLQYFTSTHGARKGLADTALKTANSGYLTRRLVDVVQDVIVYKNDCGTVDGIEVKQVQDGGEIKQNLSERILGRVLLYPIYHPVTNEIIFPENTLIDEYVVKKLEEIGIASVTIRSALTCQSERGVCALCYGRDLARGHLVNIGETVGIIAAQSIGEPGTQLTMRTFHIGGTASREIERSNFEALHSGRIVLTRVKSVENRDGVHLVIGKSGQLSIVDEQGRERERYSLPNGARLYVKEGQEVTKGTFLAEWDPFNEPFVSEVNGFIKFTDLIDGKTYQEKLDEATHQSSMTIIEYRTTSFRPSISICDAEGQTKQRITSTTPAIYSLPAGAIIMVKDGQEVQAGDIIARKPRETSKTRDIVGGLPRVAELFEVRKPKDMAVVSEIAGIVTYAGESKGKRKLIVTPEIGDPKEYLIPKGKHINVSDGDFVEAGDLLTEGHPELHDILKTRGEKYLAAYLVDEIQEVYRFQGVGIDDKHIEVIVRQMLRKITVTNPGGTTFLVGEQVDKGDFKEENQKIVEEGLEPATAEPLVLGITQASLTTSSFISAASFQETTKVLTEASLKGKMDYLRGLKENVIVGRLIPAGTGYREYMELDIVVPEQKERPNKFLEELEERPVLIEIDS.

Residues Cys-76, Cys-78, Cys-91, and Cys-94 each coordinate Zn(2+). Residues Asp-467, Asp-469, and Asp-471 each contribute to the Mg(2+) site. Zn(2+)-binding residues include Cys-810, Cys-884, Cys-891, and Cys-894.

It belongs to the RNA polymerase beta' chain family. As to quaternary structure, the RNAP catalytic core consists of 2 alpha, 1 beta, 1 beta' and 1 omega subunit. When a sigma factor is associated with the core the holoenzyme is formed, which can initiate transcription. The cofactor is Mg(2+). It depends on Zn(2+) as a cofactor.

The enzyme catalyses RNA(n) + a ribonucleoside 5'-triphosphate = RNA(n+1) + diphosphate. DNA-dependent RNA polymerase catalyzes the transcription of DNA into RNA using the four ribonucleoside triphosphates as substrates. The protein is DNA-directed RNA polymerase subunit beta' of Lawsonia intracellularis (strain PHE/MN1-00).